Here is a 160-residue protein sequence, read N- to C-terminus: Eukaryotic translation initiation factor 5A (160 aa).

A compositionally biased stretch (basic and acidic residues) spans 1–10 (MSDDDHHFES). A disordered region spans residues 1 to 23 (MSDDDHHFESSADAGASKTYPQQ). Lys-52 is modified (hypusine).

It belongs to the eIF-5A family. Post-translationally, lys-52 undergoes hypusination, a unique post-translational modification that consists in the addition of a butylamino group from spermidine to lysine side chain, leading to the formation of the unusual amino acid hypusine. eIF-5As are the only known proteins to undergo this modification, which is essential for their function.

In terms of biological role, translation factor that promotes translation elongation and termination, particularly upon ribosome stalling at specific amino acid sequence contexts. Binds between the exit (E) and peptidyl (P) site of the ribosome and promotes rescue of stalled ribosome: specifically required for efficient translation of polyproline-containing peptides as well as other motifs that stall the ribosome. Acts as a ribosome quality control (RQC) cofactor by joining the RQC complex to facilitate peptidyl transfer during CAT tailing step. The sequence is that of Eukaryotic translation initiation factor 5A from Dianthus caryophyllus (Carnation).